Here is a 272-residue protein sequence, read N- to C-terminus: MASSSSNRQFSHRNANTFLTYPKCPENPEIACQMIWELVVRWIPKYILCAREAHKDGSLHLHALLQTEKPVRISDSRFFDINGFHPNIQSAKSVNRVRDYILKEPLAVFERGTFIPRKSPFLGKSDSEVKEKKPSKDEIMRDIISHATSKEEYLSMIQKELPFDWSTKLQYFEYSANKLFPEIQEEFTNPHPPSSPDLLCNESINDWLQPNIFQVSPEAYMLLQPTCYTLEDAISDLQWMDSVSSHQMKDQESRASTSSAQQEPENLLGPEA.

The CRESS-DNA virus Rep endonuclease domain occupies 11-114; that stretch reads SHRNANTFLT…PLAVFERGTF (104 aa). An RCR-1 motif is present at residues 18–21; the sequence is FLTY. A divalent metal cation-binding residues include Glu-52, His-60, and His-62. Residues 60–62 carry the RCR-2 motif; the sequence is HLH. Tyr-100 acts as the For DNA cleavage activity in catalysis. An RCR-3 motif is present at residues 100–103; that stretch reads YILK. Position 104 (Glu-104) interacts with a divalent metal cation. Residues 175–187 are oligomerization; that stretch reads SANKLFPEIQEEF. The interval 198 to 202 is binding to RBR1; the sequence is LLCNE. Positions 221 to 230 are transactivation; sequence MLLQPTCYTL. A disordered region spans residues 245–272; it reads SHQMKDQESRASTSSAQQEPENLLGPEA. Positions 254–264 are enriched in polar residues; sequence RASTSSAQQEP.

This sequence belongs to the geminiviridae Rep protein family. Homooligomer. Interacts with host retinoblastoma-related protein 1 (RBR1), and may thereby deregulate the host cell cycle. Part of the C- and V-complexes which are RepA-Rep-DNA complexes involved in the c-sense and v-sense transcription. Mg(2+) serves as cofactor. It depends on Mn(2+) as a cofactor.

It is found in the host nucleus. The protein localises to the host cytoplasm. Functionally, implicated in enhancement of V-sense gene expression. Acts a an inhibitor of C-sense gene transcription. In Maize streak virus genotype A (isolate Nigeria) (MSV), this protein is Replication-associated protein A.